We begin with the raw amino-acid sequence, 612 residues long: Capsid protein (612 aa).

The interval 1–53 (MDANVQIRPARNNPSQGNQGRNNNNKRRRRRRGLKLPPVVAPITSPGQMAEPA) is disordered. A compositionally biased stretch (low complexity) spans 11 to 23 (RNNPSQGNQGRNN). The span at 24–34 (NNKRRRRRRGL) shows a compositional bias: basic residues.

This sequence belongs to the tetravirus capsid protein family.

It is found in the virion. Self-assembles to form an icosahedral capsid with a T=4 symmetry, about 35 nm in diameter, and consisting of 240 copies of the two structural proteins. This chain is Capsid protein, found in Nudaurelia capensis beta virus (isolate Pine emperor moth/South Africa) (NbetaV).